We begin with the raw amino-acid sequence, 852 residues long: Protein Shroom1 (852 aa).

An N-acetylmethionine modification is found at M1. S18 carries the phosphoserine modification. 3 disordered regions span residues 34–54 (SSFS…GTDL), 81–109 (TSPR…PLNR), and 125–218 (AAQA…ANQQ). Residue T103 is modified to Phosphothreonine. Positions 125 to 144 (AAQAAEPPSPPASRAAYRQR) are enriched in low complexity. S133 and S137 each carry phosphoserine. The ASD1 domain occupies 145-233 (LQGAQRRVLR…SEPGKLDRVG (89 aa)). The segment covering 152–164 (VLRETSFQRKELR) has biased composition (basic and acidic residues). A phosphoserine mark is found at S166, S190, and S224. 4 disordered regions span residues 276 to 320 (LPET…GSGG), 399 to 431 (MRSP…QRTG), 464 to 496 (SRPT…TAAE), and 823 to 852 (DLGH…LLLT). Over residues 279 to 289 (TQPQGSMNLDS) the composition is skewed to polar residues. Residues 301–313 (ASRSRSASGEVLG) show a composition bias toward low complexity. The segment covering 465-479 (RPTSHTPTGTANDNI) has biased composition (polar residues). Residues 543–825 (EELVQELARL…QLDAIRDDLG (283 aa)) enclose the ASD2 domain. The span at 830-852 (SPSPARPPGTCPPVQPPFPLLLT) shows a compositional bias: pro residues.

The protein belongs to the shroom family. Interacts with F-actin.

The protein localises to the cytoplasm. It is found in the cytoskeleton. May be involved in the assembly of microtubule arrays during cell elongation. This Homo sapiens (Human) protein is Protein Shroom1 (SHROOM1).